A 1004-amino-acid chain; its full sequence is E3 ubiquitin-protein ligase NEDD4-like (1004 aa).

The 125-residue stretch at 30 to 154 (LASHHSRGLE…TEDPTMERPY (125 aa)) folds into the C2 domain. Disordered regions lie at residues 207-230 (SNDS…WEEK) and 272-407 (AAHR…TPSV). The 34-residue stretch at 221–254 (PPLPPGWEEKVDNLGRTYYVNHNNRSTQWHRPSL) folds into the WW 1 domain. At Ser341 the chain carries Phosphoserine. Thr347 is subject to Phosphothreonine. Composition is skewed to polar residues over residues 347–359 (TPDS…SSLI) and 366–376 (RLRSCSVTDTV). At Ser371 the chain carries Phosphoserine; by WNK1 and WNK4. A Phosphothreonine; by SGK1 modification is found at Thr396. The 34-residue stretch at 414–447 (PGLPSGWEERKDAKGRTYYVNHNNRTTTWTRPIM) folds into the WW 2 domain. Positions 453-523 (GASGSATNSN…YNSPKPQHKV (71 aa)) are disordered. Ser475 carries the phosphoserine modification. Phosphoserine; by SGK1 is present on Ser477. A phosphoserine mark is found at Ser478, Ser493, Ser504, Ser508, Ser512, and Ser516. Residues 489–500 (GAKDSPIRRAVK) show a composition bias toward basic and acidic residues. 2 WW domains span residues 526-559 (SFLP…DPRL) and 577-610 (GPLP…DPRL). In terms of domain architecture, HECT spans 669–1003 (RPDVLKARLW…VENAQGFEGV (335 aa)). Cys971 serves as the catalytic Glycyl thioester intermediate.

As to quaternary structure, interacts with UBE2E3. Interacts with NDFIP1; this interaction activates the E3 ubiquitin-protein ligase. Interacts with NDFIP2; this interaction activates the E3 ubiquitin-protein ligase. Interacts (via WW domains) with SCN1A. Interacts (via WW domains) with SCN2A. Interacts (via WW domains) with SCN3A. Interacts (via WW domains) with SCN5A. Interacts (via WW domains) with SCN8A. Interacts (via WW domains) with SCN9A. Interacts (via WW domains) with SCN10A. Interacts (via WW domains) with CLCN5. Interacts with SMAD2. Interacts with SMAD3. Interacts with SMAD6. Interacts with SMAD7. The phosphorylated form interacts with 14-3-3 proteins. Interacts with TNK2. Interacts with WNK1. Interacts with SGK1. Interacts (via C2 domain) with NPC2. Interacts with ARRDC4. Interacts with KCNQ1; promotes internalization of KCNQ1. Interacts (via domains WW1, 3 and 4) with USP36; the interaction inhibits ubiquitination of, at least, NTRK1, KCNQ2 and KCNQ3 by NEDD4L. Interacts with PRRG4 (via cytoplasmic domain). Interacts with LDLRAD3; the interaction is direct. Interacts with UBE2D2. Interacts with TTYH2 and TTYH3. In terms of processing, phosphorylated; which impairs interaction with SCNN. Interaction with YWHAH inhibits dephosphorylation. Aldosterone induces Ser-477 phosphorylation by SGK1. Auto-ubiquitinated. Deubiquitinated by USP36, no effect on NEDD4L protein levels. Both proteins interact and regulate each other's ubiquitination levels. Highly expressed in liver and kidney. Also expressed in heart, brain and lung. Isoform 1 is expressed in kidney, lung and gut. Isoform 3 is ubiquitously expressed.

The protein localises to the cytoplasm. Its subcellular location is the golgi apparatus. It localises to the endosome. It is found in the multivesicular body. It catalyses the reaction S-ubiquitinyl-[E2 ubiquitin-conjugating enzyme]-L-cysteine + [acceptor protein]-L-lysine = [E2 ubiquitin-conjugating enzyme]-L-cysteine + N(6)-ubiquitinyl-[acceptor protein]-L-lysine.. The catalysed reaction is [E2 ubiquitin-conjugating enzyme]-S-ubiquitinyl-L-cysteine + [acceptor protein]-L-cysteine = [E2 ubiquitin-conjugating enzyme]-L-cysteine + [acceptor protein]-S-ubiquitinyl-L-cysteine.. It participates in protein modification; protein ubiquitination. With respect to regulation, activated by NDFIP1- and NDFIP2-binding. E3 ubiquitin-protein ligase that mediates the polyubiquitination of lysine and cysteine residues on target proteins and is thereby implicated in the regulation of various signaling pathways including autophagy, innate immunity or DNA repair. Inhibits TGF-beta signaling by triggering SMAD2 and TGFBR1 ubiquitination and proteasome-dependent degradation. Downregulates autophagy and cell growth by ubiquitinating and reducing cellular ULK1 or ASCT2 levels. Promotes ubiquitination and internalization of various plasma membrane channels such as ENaC, SCN2A/Nav1.2, SCN3A/Nav1.3, SCN5A/Nav1.5, SCN9A/Nav1.7, SCN10A/Nav1.8, KCNA3/Kv1.3, KCNH2, EAAT1, KCNQ2/Kv7.2, KCNQ3/Kv7.3 or CLC5. Promotes ubiquitination and degradation of SGK1 and TNK2. Ubiquitinates BRAT1 and this ubiquitination is enhanced in the presence of NDFIP1. Plays a role in dendrite formation by melanocytes. Involved in the regulation of TOR signaling. Ubiquitinates and regulates protein levels of NTRK1 once this one is activated by NGF. Plays a role in antiviral innate immunity by catalyzing 'Lys-29'-linked cysteine ubiquitination of TRAF3, resulting in enhanced 'Lys-48' and 'Lys-63'-linked ubiquitination of TRAF3. Ubiquitinates TTYH2 and TYYH3 and regulates protein levels of TTYH2. The protein is E3 ubiquitin-protein ligase NEDD4-like (Nedd4l) of Mus musculus (Mouse).